A 383-amino-acid chain; its full sequence is Acetylornithine deacetylase (383 aa).

Residue histidine 80 coordinates Zn(2+). Aspartate 82 is an active-site residue. Zn(2+) is bound at residue aspartate 112. Glutamate 144 is a catalytic residue. Glutamate 145, glutamate 169, and histidine 355 together coordinate Zn(2+).

This sequence belongs to the peptidase M20A family. ArgE subfamily. In terms of assembly, homodimer. The cofactor is Zn(2+). Co(2+) serves as cofactor. Requires glutathione as cofactor.

It localises to the cytoplasm. The catalysed reaction is N(2)-acetyl-L-ornithine + H2O = L-ornithine + acetate. It participates in amino-acid biosynthesis; L-arginine biosynthesis; L-ornithine from N(2)-acetyl-L-ornithine (linear): step 1/1. Its function is as follows. Catalyzes the hydrolysis of the amide bond of N(2)-acetylated L-amino acids. Cleaves the acetyl group from N-acetyl-L-ornithine to form L-ornithine, an intermediate in L-arginine biosynthesis pathway, and a branchpoint in the synthesis of polyamines. The chain is Acetylornithine deacetylase from Shigella sonnei (strain Ss046).